The chain runs to 150 residues: SsrA-binding protein (150 aa).

Belongs to the SmpB family.

The protein resides in the cytoplasm. In terms of biological role, required for rescue of stalled ribosomes mediated by trans-translation. Binds to transfer-messenger RNA (tmRNA), required for stable association of tmRNA with ribosomes. tmRNA and SmpB together mimic tRNA shape, replacing the anticodon stem-loop with SmpB. tmRNA is encoded by the ssrA gene; the 2 termini fold to resemble tRNA(Ala) and it encodes a 'tag peptide', a short internal open reading frame. During trans-translation Ala-aminoacylated tmRNA acts like a tRNA, entering the A-site of stalled ribosomes, displacing the stalled mRNA. The ribosome then switches to translate the ORF on the tmRNA; the nascent peptide is terminated with the 'tag peptide' encoded by the tmRNA and targeted for degradation. The ribosome is freed to recommence translation, which seems to be the essential function of trans-translation. This chain is SsrA-binding protein, found in Rubrobacter xylanophilus (strain DSM 9941 / JCM 11954 / NBRC 16129 / PRD-1).